Reading from the N-terminus, the 247-residue chain is Proteasome subunit alpha (247 aa).

It belongs to the peptidase T1A family. In terms of assembly, the 20S proteasome core is composed of 14 alpha and 14 beta subunits that assemble into four stacked heptameric rings, resulting in a barrel-shaped structure. The two inner rings, each composed of seven catalytic beta subunits, are sandwiched by two outer rings, each composed of seven alpha subunits. The catalytic chamber with the active sites is on the inside of the barrel. Has a gated structure, the ends of the cylinder being occluded by the N-termini of the alpha-subunits. Is capped at one or both ends by the proteasome regulatory ATPase, PAN.

The protein resides in the cytoplasm. The formation of the proteasomal ATPase PAN-20S proteasome complex, via the docking of the C-termini of PAN into the intersubunit pockets in the alpha-rings, triggers opening of the gate for substrate entry. Interconversion between the open-gate and close-gate conformations leads to a dynamic regulation of the 20S proteasome proteolysis activity. Component of the proteasome core, a large protease complex with broad specificity involved in protein degradation. In Methanosarcina thermophila, this protein is Proteasome subunit alpha.